A 317-amino-acid polypeptide reads, in one-letter code: Beta-ketoacyl-[acyl-carrier-protein] synthase III (317 aa).

Active-site residues include cysteine 112 and histidine 244. Positions 245 to 249 (QANIR) are ACP-binding. Asparagine 274 is a catalytic residue.

This sequence belongs to the thiolase-like superfamily. FabH family. Homodimer.

It localises to the cytoplasm. The catalysed reaction is malonyl-[ACP] + acetyl-CoA + H(+) = 3-oxobutanoyl-[ACP] + CO2 + CoA. It participates in lipid metabolism; fatty acid biosynthesis. Functionally, catalyzes the condensation reaction of fatty acid synthesis by the addition to an acyl acceptor of two carbons from malonyl-ACP. Catalyzes the first condensation reaction which initiates fatty acid synthesis and may therefore play a role in governing the total rate of fatty acid production. Possesses both acetoacetyl-ACP synthase and acetyl transacylase activities. Its substrate specificity determines the biosynthesis of branched-chain and/or straight-chain of fatty acids. In Rickettsia typhi (strain ATCC VR-144 / Wilmington), this protein is Beta-ketoacyl-[acyl-carrier-protein] synthase III.